Here is a 673-residue protein sequence, read N- to C-terminus: uncharacterized protein (673 aa).

Residues 1–208 are Cytoplasmic-facing; that stretch reads MSTHSNDYFS…STGQLELPPD (208 aa). S57, S112, and S172 each carry phosphoserine. The helical transmembrane segment at 209-229 threads the bilayer; the sequence is GGYGWVVTFCVFLTMFSTWGC. Residue N230 is glycosylated (N-linked (GlcNAc...) asparagine). The Lumenal segment spans residues 230–255; sequence NASFGVDLAYYLNHDTYPGASKYDYA. A helical membrane pass occupies residues 256–276; it reads LIAGLTVFLGQLLSPLVMALM. R277 is a topological domain (cytoplasmic). The chain crosses the membrane as a helical span at residues 278–298; sequence IIGLRTTMLFGDAVMLAAYLL. The Lumenal segment spans residues 299–315; that stretch reads ASFTTKLWQLYVTQGFM. The chain crosses the membrane as a helical span at residues 316 to 336; it reads VGCSISLIFVPATTVLPGWFL. Topologically, residues 337–339 are cytoplasmic; it reads KKR. The chain crosses the membrane as a helical span at residues 340 to 360; the sequence is AVAMGVSLLGTGAGGVVYGLA. The Lumenal portion of the chain corresponds to 361-372; that stretch reads TNKMLSDFGNTR. A helical transmembrane segment spans residues 373-393; it reads WCLRIIGISCSISVLVAIALL. Topologically, residues 394-426 are cytoplasmic; the sequence is KERNPTPAIGLKSPRAMFEQLKAMFSLKVITKP. The chain crosses the membrane as a helical span at residues 427-447; it reads FVVLIALWFMFALFAYNMMVF. At 448–504 the chain is on the lumenal side; the sequence is TLSSYAISKGLSSHDASTLTAILNGSQSIGRPLMGLAGDKFGRANVTIVLTTLLTIY. Residues N471 and N492 are each glycosylated (N-linked (GlcNAc...) asparagine). Residues 505 to 525 form a helical membrane-spanning segment; that stretch reads MFAFWIPAHTFVQLIFFSILV. Topologically, residues 526-549 are cytoplasmic; sequence GSCVGVANVMNTVLIADMVKPEEF. A helical transmembrane segment spans residues 550–570; the sequence is LPAWAFVNYCGAPFLLVCEVI. Topologically, residues 571 to 584 are lumenal; that stretch reads AQALTVEKDKSNPY. Residues 585–605 traverse the membrane as a helical segment; the sequence is LHAQIFCGCCFIAALILISIL. Residues 606-673 lie on the Cytoplasmic side of the membrane; it reads REYSIRMKLT…FLRMVYPMKV (68 aa). Residue S637 is modified to Phosphoserine.

It belongs to the major facilitator superfamily. Monocarboxylate porter (TC 2.A.1.13) family.

The protein localises to the endoplasmic reticulum membrane. This is an uncharacterized protein from Saccharomyces cerevisiae (strain ATCC 204508 / S288c) (Baker's yeast).